A 395-amino-acid polypeptide reads, in one-letter code: Thyroid hormone receptor beta (395 aa).

Residues Met1–Leu31 form a modulating region. Positions Asp29–Asp106 form a DNA-binding region, nuclear receptor. The Zn(2+) site is built by Cys32, Cys35, Cys49, Cys52, Cys70, Cys76, Cys86, and Cys89. 2 consecutive NR C4-type zinc fingers follow at residues Cys32–Cys52 and Cys70–Cys89. The NR LBD domain occupies Glu142 to Asp395. The 3,3',5-triiodo-L-thyronine site is built by Arg216, Asn265, and His369.

The protein belongs to the nuclear hormone receptor family. NR1 subfamily. As to quaternary structure, interacts (via the ligand-binding domain) with ncoa2. Widely expressed in a range of adult tissues including the brain, eye, fin, gill, intestine, liver, swim bladder and ovary. In the eye, expressed in the outer nuclear layer of the retina.

It is found in the nucleus. In terms of biological role, nuclear hormone receptor that can act as a repressor or activator of transcription. High affinity receptor for the thyroid gland hormone triiodothyronine (T3). Transactivating activity is ligand-dependent, and is repressed in the absence of T3. The polypeptide is Thyroid hormone receptor beta (thrb) (Danio rerio (Zebrafish)).